We begin with the raw amino-acid sequence, 887 residues long: Golgin IMH1 (887 aa).

Disordered regions lie at residues 16–50 (LAKGINEDTASEGQHGAGAQGGRREEGGSPYEELP), 142–214 (QESL…MKSQ), 240–301 (GASQ…SAGD), and 783–822 (LKMSKDMSSQSRHSSRSGSLVSPSSDNETGNSPRKISISS). 2 stretches are compositionally biased toward basic and acidic residues: residues 37–50 (GRREEGGSPYEELP) and 145–210 (LEQR…HAAE). Residues 118–241 (AMLTEEIKRI…YKSTIQELGA (124 aa)) adopt a coiled-coil conformation. The segment covering 240–254 (GASQATGEAQPSSEA) has biased composition (polar residues). Residues 258-273 (RGKKGKGKRGKGKKRV) show a composition bias toward basic residues. The stretch at 299-788 (AGDEIIEAIE…LSTQLKMSKD (490 aa)) forms a coiled coil. The segment covering 788 to 807 (DMSSQSRHSSRSGSLVSPSS) has biased composition (low complexity). A compositionally biased stretch (polar residues) spans 808 to 822 (DNETGNSPRKISISS). In terms of domain architecture, GRIP spans 837–885 (EMESNEKLAYIRNVLLGFLEHREQRSQLLPVVSTLLQLSSHDEKRLLTS).

The protein resides in the cytoplasm. It is found in the golgi apparatus membrane. In terms of biological role, involved in vesicular transport between an endosomal compartment and the Golgi apparatus. The sequence is that of Golgin IMH1 (IMH1) from Eremothecium gossypii (strain ATCC 10895 / CBS 109.51 / FGSC 9923 / NRRL Y-1056) (Yeast).